Reading from the N-terminus, the 229-residue chain is PKHD-type hydroxylase BRADO6316 (229 aa).

A Fe2OG dioxygenase domain is found at 78–180 (QIFPPLFNRY…RVASFFWLQS (103 aa)). The Fe cation site is built by histidine 98, aspartate 100, and histidine 161. Arginine 171 serves as a coordination point for 2-oxoglutarate.

Fe(2+) is required as a cofactor. Requires L-ascorbate as cofactor.

The polypeptide is PKHD-type hydroxylase BRADO6316 (Bradyrhizobium sp. (strain ORS 278)).